Here is a 304-residue protein sequence, read N- to C-terminus: Quinolinate synthase (304 aa).

Residues His-23 and Ser-40 each coordinate iminosuccinate. Cys-85 is a binding site for [4Fe-4S] cluster. Iminosuccinate contacts are provided by residues 111-113 (YVN) and Ser-128. Cys-171 provides a ligand contact to [4Fe-4S] cluster. Residues 197-199 (HPE) and Thr-214 each bind iminosuccinate. A [4Fe-4S] cluster-binding site is contributed by Cys-259.

It belongs to the quinolinate synthase family. Type 2 subfamily. [4Fe-4S] cluster is required as a cofactor.

The protein resides in the cytoplasm. It catalyses the reaction iminosuccinate + dihydroxyacetone phosphate = quinolinate + phosphate + 2 H2O + H(+). Its pathway is cofactor biosynthesis; NAD(+) biosynthesis; quinolinate from iminoaspartate: step 1/1. In terms of biological role, catalyzes the condensation of iminoaspartate with dihydroxyacetone phosphate to form quinolinate. This chain is Quinolinate synthase, found in Pelobacter propionicus (strain DSM 2379 / NBRC 103807 / OttBd1).